A 969-amino-acid polypeptide reads, in one-letter code: MAFALGQRWISDTESDLGLGTVVALDARTVTLMFAASEENRVYASNDAPVTRVVFNVGDVVECQEGWSLKVEQVVEENGLYTYLGTREDTEETGVALREIFLSNQIRFNKPQDKMYAGQIDRMDNFVLRYRALKNQYEQHRSPMRGLCGMRAGLIPHQLYIAHEVGRRHAPRVLLADEVGLGKTIEAGMIIHQQVLLGRAERILIVVPETLQHQWLVEMMRRFNLHFSIFDEERCVEAFAESDNPFDTQQYVLCSLDFLRKSRKRFEQALEAEWDLLVVDEAHHLEWSQDKPSRGYQVVEGLAERTPGVLLLTATPEQLGRESHFARLRLLDSDRFYDYAAFVEEEAQYAPVADAITALFSGVKLADEAKNQITELLSEQDVEPLFRIIESNADEESKAIARQELIDNLMDRHGTGRVLFRNTRAAIKGFPVRNVHLLPMPIPTQYTTSMRVSGMIGGKLAPEARAMKNLYPEEIFQEFEGEESSWWQFDCRVNWLLEKLKAQRSEKVLVIASRASTALQLEQALREREGIRATVFHEGMSILERDKAAAYFAQEEGGAQVLICSEIGSEGRNFQFANQLVMFDLPFNPDLLEQRIGRLDRIGQKRDIDIHVPYLQGTAQEVLARWFNEGLNAFAETCPTGRTVYDQVSDQLIEMLASGSNEALDDVIAESAKLNQALKADLEQGRDRLLEMHSNGGEKAQQIVAEIAAKDGDTNLVSFALSLFDTIGLNQDDKGENAIVVTPSEHMMVPSYPGLPYEGATITFDRDTALSREDMHFISWEHPMIQGGIDLLMSEGVGTCAVSLLKNKALPVGTLLLELIYAVDAQAPKRSGIGRFLPRTPIRLMMDARGNDLSGQVEFESFNRQLSPVNRHLASKLVSSVQNDIHRLIEAGDQLVVENVEAIRQQAQQEMQQSLNSELERLQALKAVNPNIRDEEIEAIDAQIKELNGYISKAQFQLDSLRLIVVSHN.

Residues 164 to 334 (EVGRRHAPRV…FARLRLLDSD (171 aa)) form the Helicase ATP-binding domain. 177–184 (DEVGLGKT) is a binding site for ATP. A DEAH box motif is present at residues 280-283 (DEAH). The Helicase C-terminal domain maps to 492–668 (RVNWLLEKLK…GSNEALDDVI (177 aa)).

It belongs to the SNF2/RAD54 helicase family. RapA subfamily. As to quaternary structure, interacts with the RNAP. Has a higher affinity for the core RNAP than for the holoenzyme. Its ATPase activity is stimulated by binding to RNAP.

In terms of biological role, transcription regulator that activates transcription by stimulating RNA polymerase (RNAP) recycling in case of stress conditions such as supercoiled DNA or high salt concentrations. Probably acts by releasing the RNAP, when it is trapped or immobilized on tightly supercoiled DNA. Does not activate transcription on linear DNA. Probably not involved in DNA repair. This is RNA polymerase-associated protein RapA from Vibrio vulnificus (strain CMCP6).